A 336-amino-acid polypeptide reads, in one-letter code: tRNA N6-adenosine threonylcarbamoyltransferase (336 aa).

2 residues coordinate Fe cation: H115 and H119. Residues 137 to 141, D170, G183, D187, and N276 each bind substrate; that span reads LVSGG. Residue D302 coordinates Fe cation.

It belongs to the KAE1 / TsaD family. It depends on Fe(2+) as a cofactor.

It is found in the cytoplasm. The catalysed reaction is L-threonylcarbamoyladenylate + adenosine(37) in tRNA = N(6)-L-threonylcarbamoyladenosine(37) in tRNA + AMP + H(+). Functionally, required for the formation of a threonylcarbamoyl group on adenosine at position 37 (t(6)A37) in tRNAs that read codons beginning with adenine. Is involved in the transfer of the threonylcarbamoyl moiety of threonylcarbamoyl-AMP (TC-AMP) to the N6 group of A37, together with TsaE and TsaB. TsaD likely plays a direct catalytic role in this reaction. This Streptococcus suis (strain 98HAH33) protein is tRNA N6-adenosine threonylcarbamoyltransferase.